The primary structure comprises 158 residues: Ribosomal RNA large subunit methyltransferase H (158 aa).

S-adenosyl-L-methionine contacts are provided by residues leucine 74, glycine 105, and 124–129 (LGPLTL).

Belongs to the RNA methyltransferase RlmH family. As to quaternary structure, homodimer.

Its subcellular location is the cytoplasm. It carries out the reaction pseudouridine(1915) in 23S rRNA + S-adenosyl-L-methionine = N(3)-methylpseudouridine(1915) in 23S rRNA + S-adenosyl-L-homocysteine + H(+). Its function is as follows. Specifically methylates the pseudouridine at position 1915 (m3Psi1915) in 23S rRNA. The sequence is that of Ribosomal RNA large subunit methyltransferase H from Xylella fastidiosa (strain Temecula1 / ATCC 700964).